The primary structure comprises 354 residues: MQTLHALLRDIPAPDTDAMARAQQHIDGLLKPPGSLGRLEALAVQLAGMPGLNGTPQVGEKAMLVMCADHGVWDEGVAVSPKIVTAIQAANMTRGTTGVCVLAAQAGAKVHVIDVGIDAEPIPGVVNMRVARGCGNIAVGPAMSRSQAEVLLLEVIRYTCDLAQRGVTLFGVGELGMANTTPAAAMVSVFTGSDAKEVVGIGANLPPSRIDNKVDVVRRAIAINQPDPHDGIDVLSKVGGFDLVGMTGVMLGAARCGLPVLLDGFLSYSAALAACQIAPAVRSYLIPSHFSAEKGARIALAHLAMEPYLHMAMRLGEGSGAALAMPIVEAACAMFHNMGELAASNIVLPGEKQT.

Glu317 functions as the Proton acceptor in the catalytic mechanism.

This sequence belongs to the CobT family. Homodimer.

It catalyses the reaction 5,6-dimethylbenzimidazole + nicotinate beta-D-ribonucleotide = alpha-ribazole 5'-phosphate + nicotinate + H(+). It participates in nucleoside biosynthesis; alpha-ribazole biosynthesis; alpha-ribazole from 5,6-dimethylbenzimidazole: step 1/2. In terms of biological role, catalyzes the synthesis of alpha-ribazole-5'-phosphate from nicotinate mononucleotide (NAMN) and 5,6-dimethylbenzimidazole (DMB). The sequence is that of Nicotinate-nucleotide--dimethylbenzimidazole phosphoribosyltransferase from Salmonella arizonae (strain ATCC BAA-731 / CDC346-86 / RSK2980).